Reading from the N-terminus, the 452-residue chain is tRNA modification GTPase MnmE (452 aa).

Residues Arg-28, Glu-85, and Lys-124 each contribute to the (6S)-5-formyl-5,6,7,8-tetrahydrofolate site. The 159-residue stretch at 220–378 folds into the TrmE-type G domain; the sequence is GMNVVLVGRP…LRTELLRAAG (159 aa). Asn-230 serves as a coordination point for K(+). GTP-binding positions include 230–235, 249–255, 274–277, and 359–361; these read NVGKSS, TDVAGTT, DTAG, and SAR. Ser-234 provides a ligand contact to Mg(2+). Positions 249, 251, and 254 each coordinate K(+). Residue Thr-255 coordinates Mg(2+). Lys-452 contacts (6S)-5-formyl-5,6,7,8-tetrahydrofolate.

The protein belongs to the TRAFAC class TrmE-Era-EngA-EngB-Septin-like GTPase superfamily. TrmE GTPase family. As to quaternary structure, homodimer. Heterotetramer of two MnmE and two MnmG subunits. Requires K(+) as cofactor.

It is found in the cytoplasm. Its function is as follows. Exhibits a very high intrinsic GTPase hydrolysis rate. Involved in the addition of a carboxymethylaminomethyl (cmnm) group at the wobble position (U34) of certain tRNAs, forming tRNA-cmnm(5)s(2)U34. The sequence is that of tRNA modification GTPase MnmE from Azoarcus sp. (strain BH72).